The primary structure comprises 181 residues: Transcriptional repressor NrdR (181 aa).

Residues C3 to C34 fold into a zinc finger. Residues P49 to D139 enclose the ATP-cone domain.

It belongs to the NrdR family. Requires Zn(2+) as cofactor.

Functionally, negatively regulates transcription of bacterial ribonucleotide reductase nrd genes and operons by binding to NrdR-boxes. This is Transcriptional repressor NrdR from Xylella fastidiosa (strain M12).